Reading from the N-terminus, the 599-residue chain is NADH-quinone oxidoreductase subunit C/D (599 aa).

The interval 1-189 is NADH dehydrogenase I subunit C; sequence MTDLTTHDLA…DPFELTKQKE (189 aa). Residues 213–599 form an NADH dehydrogenase I subunit D region; it reads DFMFLNLGPN…IDFVMSDVDR (387 aa).

This sequence in the N-terminal section; belongs to the complex I 30 kDa subunit family. In the C-terminal section; belongs to the complex I 49 kDa subunit family. In terms of assembly, NDH-1 is composed of 13 different subunits. Subunits NuoB, CD, E, F, and G constitute the peripheral sector of the complex.

The protein resides in the cell inner membrane. The catalysed reaction is a quinone + NADH + 5 H(+)(in) = a quinol + NAD(+) + 4 H(+)(out). Functionally, NDH-1 shuttles electrons from NADH, via FMN and iron-sulfur (Fe-S) centers, to quinones in the respiratory chain. The immediate electron acceptor for the enzyme in this species is believed to be ubiquinone. Couples the redox reaction to proton translocation (for every two electrons transferred, four hydrogen ions are translocated across the cytoplasmic membrane), and thus conserves the redox energy in a proton gradient. The protein is NADH-quinone oxidoreductase subunit C/D of Pectobacterium atrosepticum (strain SCRI 1043 / ATCC BAA-672) (Erwinia carotovora subsp. atroseptica).